Reading from the N-terminus, the 146-residue chain is Large ribosomal subunit protein uL15 (146 aa).

The interval 1 to 64 (MELNSIKPAA…MPMHRRLPKR (64 aa)) is disordered. Over residues 30–39 (TATKGHKGQK) the composition is skewed to basic residues.

Belongs to the universal ribosomal protein uL15 family. In terms of assembly, part of the 50S ribosomal subunit.

Binds to the 23S rRNA. In Geotalea daltonii (strain DSM 22248 / JCM 15807 / FRC-32) (Geobacter daltonii), this protein is Large ribosomal subunit protein uL15.